Consider the following 171-residue polypeptide: Small ribosomal subunit protein uS5 (171 aa).

The S5 DRBM domain occupies 15 to 78; sequence LKDRLVAINR…EAAKKNLTRV (64 aa).

The protein belongs to the universal ribosomal protein uS5 family. Part of the 30S ribosomal subunit. Contacts proteins S4 and S8.

Functionally, with S4 and S12 plays an important role in translational accuracy. Located at the back of the 30S subunit body where it stabilizes the conformation of the head with respect to the body. This chain is Small ribosomal subunit protein uS5, found in Phocaeicola vulgatus (strain ATCC 8482 / DSM 1447 / JCM 5826 / CCUG 4940 / NBRC 14291 / NCTC 11154) (Bacteroides vulgatus).